The following is a 431-amino-acid chain: Enolase (431 aa).

Position 167 (Gln167) interacts with (2R)-2-phosphoglycerate. Glu209 (proton donor) is an active-site residue. Mg(2+)-binding residues include Asp246, Glu289, and Asp316. Lys341, Arg370, Ser371, and Lys392 together coordinate (2R)-2-phosphoglycerate. The active-site Proton acceptor is the Lys341.

It belongs to the enolase family. Component of the RNA degradosome, a multiprotein complex involved in RNA processing and mRNA degradation. Mg(2+) serves as cofactor.

It localises to the cytoplasm. The protein resides in the secreted. Its subcellular location is the cell surface. It carries out the reaction (2R)-2-phosphoglycerate = phosphoenolpyruvate + H2O. It functions in the pathway carbohydrate degradation; glycolysis; pyruvate from D-glyceraldehyde 3-phosphate: step 4/5. Functionally, catalyzes the reversible conversion of 2-phosphoglycerate (2-PG) into phosphoenolpyruvate (PEP). It is essential for the degradation of carbohydrates via glycolysis. The polypeptide is Enolase (Shewanella loihica (strain ATCC BAA-1088 / PV-4)).